A 326-amino-acid polypeptide reads, in one-letter code: Glycerol-3-phosphate dehydrogenase [NAD(P)+] (326 aa).

NADPH-binding residues include Trp13, Arg33, and Lys107. Sn-glycerol 3-phosphate is bound by residues Lys107, Gly135, and Ser137. Ala139 is a binding site for NADPH. Lys190, Asp243, Ser253, Arg254, and Asn255 together coordinate sn-glycerol 3-phosphate. The Proton acceptor role is filled by Lys190. Arg254 contacts NADPH. Residues Leu273 and Glu275 each coordinate NADPH.

This sequence belongs to the NAD-dependent glycerol-3-phosphate dehydrogenase family.

It localises to the cytoplasm. It catalyses the reaction sn-glycerol 3-phosphate + NAD(+) = dihydroxyacetone phosphate + NADH + H(+). The enzyme catalyses sn-glycerol 3-phosphate + NADP(+) = dihydroxyacetone phosphate + NADPH + H(+). It participates in membrane lipid metabolism; glycerophospholipid metabolism. Its function is as follows. Catalyzes the reduction of the glycolytic intermediate dihydroxyacetone phosphate (DHAP) to sn-glycerol 3-phosphate (G3P), the key precursor for phospholipid synthesis. This is Glycerol-3-phosphate dehydrogenase [NAD(P)+] from Brucella abortus (strain 2308).